We begin with the raw amino-acid sequence, 1563 residues long: Superkiller complex protein 3 (1563 aa).

S2 is subject to N-acetylserine. 22 TPR repeats span residues 6–39, 40–73, 157–196, 272–305, 307–339, 386–419, 420–453, 455–492, 493–527, 564–597, 598–631, 632–665, 633–665, 673–713, 790–824, 826–860, 861–894, 980–1013, 1020–1053, 1055–1084, 1325–1358, and 1399–1432; these read VKTA…EKNN, YNAW…EPEQ, YELW…ADNI, GPGL…SPVC, AGWC…IDNF, PGLL…YPDL, AEAH…DAEV, EYHY…DAHM, GKVF…DDND, KWAW…DPKD, CNCW…NPDS, TYSV…KEDY, YSVF…KEDY, GECH…RADV, VQHL…DSNN, LHWN…EQIN, AAAW…DPSY, ASAF…LHSA, NVAV…ELED, IGFA…CKSE, KWSF…NPDQ, and VPAW…ASQQ.

Belongs to the SKI3 family. In terms of assembly, component of the SKI complex which consists of SKIC2, SKIC3 and SKIC8. Interacts with PAF1.

The protein resides in the cytoplasm. Its subcellular location is the nucleus. In terms of biological role, component of the SKI complex, a multiprotein complex that assists the RNA-degrading exosome during the mRNA decay and quality-control pathways. The SKI complex catalyzes mRNA extraction from 80S ribosomal complexes in the 3'-5' direction and channels mRNA to the cytosolic exosome for degradation. SKI-mediated extraction of mRNA from stalled ribosomes allow binding of the Pelota-HBS1L complex and subsequent ribosome disassembly by ABCE1 for ribosome recycling. In the nucleus, the SKI complex associates with transcriptionally active genes in a manner dependent on PAF1 complex (PAF1C). This chain is Superkiller complex protein 3, found in Mus musculus (Mouse).